Consider the following 37-residue polypeptide: Large ribosomal subunit protein bL36 (37 aa).

Belongs to the bacterial ribosomal protein bL36 family.

In Synechococcus sp. (strain WH7803), this protein is Large ribosomal subunit protein bL36.